The primary structure comprises 96 residues: Acylphosphatase (96 aa).

The Acylphosphatase-like domain maps to Cys-9 to Arg-96. Active-site residues include Arg-24 and Asn-42.

Belongs to the acylphosphatase family.

It carries out the reaction an acyl phosphate + H2O = a carboxylate + phosphate + H(+). In Methanococcoides burtonii (strain DSM 6242 / NBRC 107633 / OCM 468 / ACE-M), this protein is Acylphosphatase (acyP).